The primary structure comprises 108 residues: uncharacterized protein (108 aa).

The chain crosses the membrane as a helical span at residues 64 to 84; it reads LFIIYYYYYLLICLSPHFFPI.

It is found in the membrane. This is an uncharacterized protein from Schizosaccharomyces pombe (strain 972 / ATCC 24843) (Fission yeast).